Consider the following 545-residue polypeptide: Ribulokinase (545 aa).

This sequence belongs to the ribulokinase family.

The catalysed reaction is D-ribulose + ATP = D-ribulose 5-phosphate + ADP + H(+). It catalyses the reaction L-ribulose + ATP = L-ribulose 5-phosphate + ADP + H(+). It participates in carbohydrate degradation; L-arabinose degradation via L-ribulose; D-xylulose 5-phosphate from L-arabinose (bacterial route): step 2/3. The chain is Ribulokinase from Staphylococcus aureus (strain MSSA476).